The primary structure comprises 177 residues: Cell division protein ZapC (177 aa).

This sequence belongs to the ZapC family. In terms of assembly, interacts directly with FtsZ.

It localises to the cytoplasm. Its function is as follows. Contributes to the efficiency of the cell division process by stabilizing the polymeric form of the cell division protein FtsZ. Acts by promoting interactions between FtsZ protofilaments and suppressing the GTPase activity of FtsZ. The protein is Cell division protein ZapC of Shewanella oneidensis (strain ATCC 700550 / JCM 31522 / CIP 106686 / LMG 19005 / NCIMB 14063 / MR-1).